Reading from the N-terminus, the 520-residue chain is 1,4-alpha-glucan branching enzyme TTHA1902 (520 aa).

Glu184 functions as the Nucleophile in the catalytic mechanism. Residues Arg265 and Gly282 each contribute to the substrate site. Asp353 acts as the Proton donor in catalysis. Substrate-binding residues include Trp404, Asp460, and Gln469.

This sequence belongs to the glycosyl hydrolase 57 family.

The enzyme catalyses Transfers a segment of a (1-&gt;4)-alpha-D-glucan chain to a primary hydroxy group in a similar glucan chain.. It participates in glycan biosynthesis; glycogen biosynthesis. In terms of biological role, catalyzes the formation of branch points in alpha-glucans by cleavage of an alpha-1,4 glycosidic bond and subsequent transfer of the cleaved-off oligosaccharide to a new alpha-1,6 position. The branch chain-length distribution of the reaction products shows degree of polymerization (DP) of 3 to 13, with two local maxima at DP 7 and DP 11. Exhibits an alpha-retaining catalytic mechanism. Is involved in glycogen biosynthesis. Shows a secondary activity, i.e. the hydrolysis of the substrate, being 4% of the total activity. Can use amylose as substrate but not alpha-1,4-linked oligosaccharides of 2-7 glucose residues, beta-cyclodextrin, 6-O-glucosyl-beta-cyclodextrin and 6-O-maltosyl-beta-cyclodextrin. Is not able to branch amylopectin further, it only hydrolyzes amylopectin. Thus, displays preference for linear and long substrates (amylose) over branched structures (amylopectin). The polypeptide is 1,4-alpha-glucan branching enzyme TTHA1902 (Thermus thermophilus (strain ATCC 27634 / DSM 579 / HB8)).